The sequence spans 341 residues: Ribosomal RNA small subunit methyltransferase H (341 aa).

S-adenosyl-L-methionine is bound by residues 47–49 (GGY), Asp64, Phe91, Asp109, and Gln116.

Belongs to the methyltransferase superfamily. RsmH family.

The protein localises to the cytoplasm. It carries out the reaction cytidine(1402) in 16S rRNA + S-adenosyl-L-methionine = N(4)-methylcytidine(1402) in 16S rRNA + S-adenosyl-L-homocysteine + H(+). Specifically methylates the N4 position of cytidine in position 1402 (C1402) of 16S rRNA. The protein is Ribosomal RNA small subunit methyltransferase H of Sinorhizobium medicae (strain WSM419) (Ensifer medicae).